A 403-amino-acid chain; its full sequence is D-mannonate dehydratase (403 aa).

The substrate site is built by N38 and H123. Y160 acts as the Proton donor/acceptor in catalysis. Position 211 (D211) interacts with Mg(2+). The active-site Proton donor/acceptor is the H213. Residues E237 and E263 each coordinate Mg(2+). The substrate site is built by E263, R284, H313, D317, and E340.

Belongs to the mandelate racemase/muconate lactonizing enzyme family. GalD subfamily. Requires Mg(2+) as cofactor.

The enzyme catalyses D-mannonate = 2-dehydro-3-deoxy-D-gluconate + H2O. It participates in carbohydrate metabolism; pentose and glucuronate interconversion. Its function is as follows. Catalyzes the dehydration of D-mannonate. Has no detectable activity with a panel of 70 other acid sugars (in vitro). This chain is D-mannonate dehydratase, found in Sphingomonas sp. (strain SKA58).